A 320-amino-acid polypeptide reads, in one-letter code: Ribose-phosphate pyrophosphokinase (320 aa).

41–43 (NDN) contacts ATP. Mg(2+) is bound by residues H134 and D175. Residue K198 is part of the active site. D-ribose 5-phosphate contacts are provided by R200 and D224.

This sequence belongs to the ribose-phosphate pyrophosphokinase family. Class I subfamily. In terms of assembly, homohexamer. Requires Mg(2+) as cofactor.

The protein localises to the cytoplasm. It carries out the reaction D-ribose 5-phosphate + ATP = 5-phospho-alpha-D-ribose 1-diphosphate + AMP + H(+). It participates in metabolic intermediate biosynthesis; 5-phospho-alpha-D-ribose 1-diphosphate biosynthesis; 5-phospho-alpha-D-ribose 1-diphosphate from D-ribose 5-phosphate (route I): step 1/1. Its function is as follows. Involved in the biosynthesis of the central metabolite phospho-alpha-D-ribosyl-1-pyrophosphate (PRPP) via the transfer of pyrophosphoryl group from ATP to 1-hydroxyl of ribose-5-phosphate (Rib-5-P). The chain is Ribose-phosphate pyrophosphokinase from Deinococcus radiodurans (strain ATCC 13939 / DSM 20539 / JCM 16871 / CCUG 27074 / LMG 4051 / NBRC 15346 / NCIMB 9279 / VKM B-1422 / R1).